We begin with the raw amino-acid sequence, 469 residues long: Argininosuccinate lyase (469 aa).

It belongs to the lyase 1 family. Argininosuccinate lyase subfamily.

The protein resides in the cytoplasm. The enzyme catalyses 2-(N(omega)-L-arginino)succinate = fumarate + L-arginine. The protein operates within amino-acid biosynthesis; L-arginine biosynthesis; L-arginine from L-ornithine and carbamoyl phosphate: step 3/3. The protein is Argininosuccinate lyase of Burkholderia cenocepacia (strain ATCC BAA-245 / DSM 16553 / LMG 16656 / NCTC 13227 / J2315 / CF5610) (Burkholderia cepacia (strain J2315)).